The chain runs to 252 residues: Major prion protein (252 aa).

The N-terminal stretch at 1-22 is a signal peptide; it reads MANLGCWMLFLFVATWSDLGLC. The tract at residues 23–38 is interaction with ADGRG6; the sequence is KKRPKPGGWNTGGSRY. The segment at 23-229 is interaction with GRB2, ERI3 and SYN1; that stretch reads KKRPKPGGWN…ESQAYYQRGS (207 aa). The interval 26–106 is disordered; the sequence is PKPGGWNTGG…QWNKPSKPKT (81 aa). 5 tandem repeats follow at residues 51–58, 59–66, 67–74, 75–82, and 83–90. The 5 X 8 AA tandem repeats of P-H-G-G-G-W-G-Q stretch occupies residues 51–90; sequence PQGGGWGQPHGGGWGQPHGGGWGQPHGGGWGQPHGGGWGQ. A compositionally biased stretch (gly residues) spans 52–94; that stretch reads QGGGWGQPHGGGWGQPHGGGWGQPHGGGWGQPHGGGWGQGGGT. Residues histidine 60, glycine 61, glycine 62, histidine 68, glycine 69, glycine 70, histidine 76, glycine 77, glycine 78, histidine 84, glycine 85, and glycine 86 each contribute to the Cu(2+) site. A disulfide bond links cysteine 178 and cysteine 213. N-linked (GlcNAc...) asparagine glycosylation is found at asparagine 180 and asparagine 196. Serine 229 is lipidated: GPI-anchor amidated serine. Positions 230-252 are cleaved as a propeptide — removed in mature form; sequence SMVLFSSPPVILLISFLIFLIVG.

The protein belongs to the prion family. Monomer and homodimer. Has a tendency to aggregate into amyloid fibrils containing a cross-beta spine, formed by a steric zipper of superposed beta-strands. Soluble oligomers may represent an intermediate stage on the path to fibril formation. Copper binding may promote oligomerization. Interacts with GRB2, APP, ERI3/PRNPIP and SYN1. Mislocalized cytosolically exposed PrP interacts with MGRN1; this interaction alters MGRN1 subcellular location and causes lysosomal enlargement. Interacts with APP. Interacts with KIAA1191. Interacts with ADGRG6.

The protein localises to the cell membrane. The protein resides in the golgi apparatus. In terms of biological role, its primary physiological function is unclear. May play a role in neuronal development and synaptic plasticity. May be required for neuronal myelin sheath maintenance. May promote myelin homeostasis through acting as an agonist for ADGRG6 receptor. May play a role in iron uptake and iron homeostasis. Soluble oligomers are toxic to cultured neuroblastoma cells and induce apoptosis (in vitro). Association with GPC1 (via its heparan sulfate chains) targets PRNP to lipid rafts. Also provides Cu(2+) or Zn(2+) for the ascorbate-mediated GPC1 deaminase degradation of its heparan sulfate side chains. The polypeptide is Major prion protein (PRNP) (Callithrix jacchus (White-tufted-ear marmoset)).